The sequence spans 198 residues: Dynein axonemal light chain 1 (198 aa).

LRR repeat units follow at residues 49-70 (ACKHLALSTNNIEKISSLSGME), 71-92 (NLRILSLGRNLIKKIENLDAVA), 94-115 (TLEELWISYNQIASLSGIEKLV), and 116-137 (NLRVLYMSNNKITNWGEIDKLA). Residues 157-195 (KENNATSEYRIEVVKRLPNLKKLDGMPVDVDEREQANVA) form the LRRCT domain.

This sequence belongs to the dynein light chain LC1-type family. In terms of assembly, interacts with OCAD2, a outer arm dynein heavy chain. Interacts with tubulin (previously called p45) located within the A-tubule of the outer doublets in a ATP-independent manner.

The protein localises to the cytoplasm. It is found in the cytoskeleton. Its subcellular location is the flagellum axoneme. In terms of biological role, part of the multisubunit axonemal ATPase complexes that generate the force for flagellar motility and govern beat frequency. Component of the outer arm dynein (ODA). May be involved in a mechanosensory feedback mechanism controlling ODA activity based on external conformational cues by tethering the outer arm dynein heavy chain (ODA2) to the A-tubule of the outer doublet microtubules within the axoneme. This chain is Dynein axonemal light chain 1, found in Chlamydomonas reinhardtii (Chlamydomonas smithii).